The primary structure comprises 150 residues: Cytochrome c oxidase subunit 5A, mitochondrial (150 aa).

The N-terminal 41 residues, methionine 1–tyrosine 41, are a transit peptide targeting the mitochondrion. The SIFI-degron signature appears at leucine 2–alanine 17. N6-acetyllysine is present on residues lysine 87 and lysine 113. A Phosphothreonine modification is found at threonine 141.

Belongs to the cytochrome c oxidase subunit 5A family. In terms of assembly, component of the cytochrome c oxidase (complex IV, CIV), a multisubunit enzyme composed of 14 subunits. The complex is composed of a catalytic core of 3 subunits MT-CO1, MT-CO2 and MT-CO3, encoded in the mitochondrial DNA, and 11 supernumerary subunits COX4I, COX5A, COX5B, COX6A, COX6B, COX6C, COX7A, COX7B, COX7C, COX8 and NDUFA4, which are encoded in the nuclear genome. The complex exists as a monomer or a dimer and forms supercomplexes (SCs) in the inner mitochondrial membrane with NADH-ubiquinone oxidoreductase (complex I, CI) and ubiquinol-cytochrome c oxidoreductase (cytochrome b-c1 complex, complex III, CIII), resulting in different assemblies (supercomplex SCI(1)III(2)IV(1) and megacomplex MCI(2)III(2)IV(2)). Interacts with AFG1L. Interacts with RAB5IF. Post-translationally, in response to mitochondrial stress, the precursor protein is ubiquitinated by the SIFI complex in the cytoplasm before mitochondrial import, leading to its degradation. Within the SIFI complex, UBR4 initiates ubiquitin chain that are further elongated or branched by KCMF1.

It localises to the mitochondrion inner membrane. Its pathway is energy metabolism; oxidative phosphorylation. Component of the cytochrome c oxidase, the last enzyme in the mitochondrial electron transport chain which drives oxidative phosphorylation. The respiratory chain contains 3 multisubunit complexes succinate dehydrogenase (complex II, CII), ubiquinol-cytochrome c oxidoreductase (cytochrome b-c1 complex, complex III, CIII) and cytochrome c oxidase (complex IV, CIV), that cooperate to transfer electrons derived from NADH and succinate to molecular oxygen, creating an electrochemical gradient over the inner membrane that drives transmembrane transport and the ATP synthase. Cytochrome c oxidase is the component of the respiratory chain that catalyzes the reduction of oxygen to water. Electrons originating from reduced cytochrome c in the intermembrane space (IMS) are transferred via the dinuclear copper A center (CU(A)) of subunit 2 and heme A of subunit 1 to the active site in subunit 1, a binuclear center (BNC) formed by heme A3 and copper B (CU(B)). The BNC reduces molecular oxygen to 2 water molecules using 4 electrons from cytochrome c in the IMS and 4 protons from the mitochondrial matrix. In Saimiri sciureus (Common squirrel monkey), this protein is Cytochrome c oxidase subunit 5A, mitochondrial (COX5A).